The following is a 168-amino-acid chain: NADH-quinone oxidoreductase subunit I (168 aa).

4Fe-4S ferredoxin-type domains lie at 58 to 88 and 99 to 128; these read LRTY…IEAQ and VRYD…EGPN. [4Fe-4S] cluster contacts are provided by C68, C71, C74, C78, C108, C111, C114, and C118.

The protein belongs to the complex I 23 kDa subunit family. NDH-1 is composed of 14 different subunits. Subunits NuoA, H, J, K, L, M, N constitute the membrane sector of the complex. It depends on [4Fe-4S] cluster as a cofactor.

Its subcellular location is the cell inner membrane. The catalysed reaction is a quinone + NADH + 5 H(+)(in) = a quinol + NAD(+) + 4 H(+)(out). NDH-1 shuttles electrons from NADH, via FMN and iron-sulfur (Fe-S) centers, to quinones in the respiratory chain. The immediate electron acceptor for the enzyme in this species is believed to be ubiquinone. Couples the redox reaction to proton translocation (for every two electrons transferred, four hydrogen ions are translocated across the cytoplasmic membrane), and thus conserves the redox energy in a proton gradient. This is NADH-quinone oxidoreductase subunit I from Ehrlichia ruminantium (strain Gardel).